Here is a 274-residue protein sequence, read N- to C-terminus: Large ribosomal subunit protein uL2 (274 aa).

Residues 224–274 (VMNPVDHPHGGGEGRSPIGRNPVTPWGKPALGARTRKKKPGDRLIVKRRAR) are disordered. Over residues 257 to 274 (RTRKKKPGDRLIVKRRAR) the composition is skewed to basic residues.

The protein belongs to the universal ribosomal protein uL2 family. Part of the 50S ribosomal subunit. Forms a bridge to the 30S subunit in the 70S ribosome.

Its function is as follows. One of the primary rRNA binding proteins. Required for association of the 30S and 50S subunits to form the 70S ribosome, for tRNA binding and peptide bond formation. It has been suggested to have peptidyltransferase activity; this is somewhat controversial. Makes several contacts with the 16S rRNA in the 70S ribosome. The protein is Large ribosomal subunit protein uL2 of Pelotomaculum thermopropionicum (strain DSM 13744 / JCM 10971 / SI).